A 211-amino-acid polypeptide reads, in one-letter code: FMN-dependent NADH:quinone oxidoreductase (211 aa).

FMN contacts are provided by residues Ser-10 and 16–18; that span reads SVS.

The protein belongs to the azoreductase type 1 family. As to quaternary structure, homodimer. FMN serves as cofactor.

The enzyme catalyses 2 a quinone + NADH + H(+) = 2 a 1,4-benzosemiquinone + NAD(+). It catalyses the reaction N,N-dimethyl-1,4-phenylenediamine + anthranilate + 2 NAD(+) = 2-(4-dimethylaminophenyl)diazenylbenzoate + 2 NADH + 2 H(+). Quinone reductase that provides resistance to thiol-specific stress caused by electrophilic quinones. Functionally, also exhibits azoreductase activity. Catalyzes the reductive cleavage of the azo bond in aromatic azo compounds to the corresponding amines. In Parafrankia sp. (strain EAN1pec), this protein is FMN-dependent NADH:quinone oxidoreductase.